We begin with the raw amino-acid sequence, 687 residues long: DNA-directed RNA polymerase subunit beta' (687 aa).

Residues Cys-69, Cys-71, Cys-87, and Cys-90 each coordinate Zn(2+). 3 residues coordinate Mg(2+): Asp-491, Asp-493, and Asp-495.

This sequence belongs to the RNA polymerase beta' chain family. RpoC1 subfamily. In plastids the minimal PEP RNA polymerase catalytic core is composed of four subunits: alpha, beta, beta', and beta''. When a (nuclear-encoded) sigma factor is associated with the core the holoenzyme is formed, which can initiate transcription. Mg(2+) is required as a cofactor. Zn(2+) serves as cofactor.

The protein localises to the plastid. The protein resides in the chloroplast. It catalyses the reaction RNA(n) + a ribonucleoside 5'-triphosphate = RNA(n+1) + diphosphate. Its function is as follows. DNA-dependent RNA polymerase catalyzes the transcription of DNA into RNA using the four ribonucleoside triphosphates as substrates. The sequence is that of DNA-directed RNA polymerase subunit beta' from Glycine max (Soybean).